We begin with the raw amino-acid sequence, 399 residues long: Beta sliding clamp (399 aa).

Belongs to the beta sliding clamp family. As to quaternary structure, forms a ring-shaped head-to-tail homodimer around DNA which binds and tethers DNA polymerases and other proteins to the DNA. The DNA replisome complex has a single clamp-loading complex (3 tau and 1 each of delta, delta', psi and chi subunits) which binds 3 Pol III cores (1 core on the leading strand and 2 on the lagging strand) each with a beta sliding clamp dimer. Additional proteins in the replisome are other copies of gamma, psi and chi, Ssb, DNA helicase and RNA primase.

Its subcellular location is the cytoplasm. Its function is as follows. Confers DNA tethering and processivity to DNA polymerases and other proteins. Acts as a clamp, forming a ring around DNA (a reaction catalyzed by the clamp-loading complex) which diffuses in an ATP-independent manner freely and bidirectionally along dsDNA. Initially characterized for its ability to contact the catalytic subunit of DNA polymerase III (Pol III), a complex, multichain enzyme responsible for most of the replicative synthesis in bacteria; Pol III exhibits 3'-5' exonuclease proofreading activity. The beta chain is required for initiation of replication as well as for processivity of DNA replication. In Mycobacterium leprae (strain TN), this protein is Beta sliding clamp (dnaN).